The primary structure comprises 648 residues: Chaperone protein HtpG (648 aa).

The interval Met-1 to Arg-349 is a; substrate-binding. The segment at Glu-350–Arg-570 is b. The interval Ile-571–Asp-648 is c.

It belongs to the heat shock protein 90 family. In terms of assembly, homodimer.

It localises to the cytoplasm. Its function is as follows. Molecular chaperone. Has ATPase activity. In Aromatoleum aromaticum (strain DSM 19018 / LMG 30748 / EbN1) (Azoarcus sp. (strain EbN1)), this protein is Chaperone protein HtpG.